We begin with the raw amino-acid sequence, 255 residues long: EEF1A lysine methyltransferase 4 (255 aa).

Positions 26 and 30 each coordinate S-adenosyl-L-methionine. Y39 carries the post-translational modification Phosphotyrosine. Residues W41, G66, 88–89 (DY), 113–114 (DV), and K130 each bind S-adenosyl-L-methionine. The Required for methyltransferase activity motif lies at 129–134 (EKGTLD).

This sequence belongs to the methyltransferase superfamily.

The catalysed reaction is L-lysyl-[protein] + S-adenosyl-L-methionine = N(6)-methyl-L-lysyl-[protein] + S-adenosyl-L-homocysteine + H(+). It carries out the reaction N(6)-methyl-L-lysyl-[protein] + S-adenosyl-L-methionine = N(6),N(6)-dimethyl-L-lysyl-[protein] + S-adenosyl-L-homocysteine + H(+). It catalyses the reaction N(6),N(6)-dimethyl-L-lysyl-[protein] + S-adenosyl-L-methionine = N(6),N(6),N(6)-trimethyl-L-lysyl-[protein] + S-adenosyl-L-homocysteine + H(+). Functionally, protein-lysine methyltransferase that efficiently catalyzes three successive methylations on 'Lys-36' in eukaryotic translation elongation factor 1 alpha (EEF1A1 or EEF1A2). The protein is EEF1A lysine methyltransferase 4 of Bos taurus (Bovine).